A 238-amino-acid chain; its full sequence is Ribosomal RNA small subunit methyltransferase G (238 aa).

Residues Gly80, 131-132, and Arg148 contribute to the S-adenosyl-L-methionine site; that span reads AE.

Belongs to the methyltransferase superfamily. RNA methyltransferase RsmG family.

The protein resides in the cytoplasm. In terms of biological role, specifically methylates the N7 position of a guanine in 16S rRNA. This is Ribosomal RNA small subunit methyltransferase G from Thermotoga maritima (strain ATCC 43589 / DSM 3109 / JCM 10099 / NBRC 100826 / MSB8).